The primary structure comprises 538 residues: MNLQILLLLLLFCHVAAVCRDTETCIERVKEVVAAPRRFWFGEQRSALCSNRNAKSLECGGPPQLASFHSIASRLFRVKTYHSAYLRNLYIFPRVTYRASPGHYRACEHDFFSGNTSAVQADPDMDPVEPFRIRKRPEITWSGLQYDEQYTVVITDVGYATINFLAVDFPKATKILKDYEPTENYRPSPNPMVVLVFRNGRADIESPKSEEDFNLPQFMLKHELEDDLVGLSLIVASSDPFAIEKQRLRGKVDYCHSLLQKRLASNPPRHHTILHRLPIDEIDSWLSVSFDQHQVNGNVCCQRIKLPKTSIFLDPLGDVSISALTTLTPPSISSMRISSSQSNYINYHRQTRNFVELSNEKFSLAIIDAHHGHLHWLEVDIPAANLNAANGNGLTKADYVPLIPKKPSTCHSYLFVLLAQPASMQTLESYCEGMCETRKKFRLELFKQQHGLRLSALSTVSSCYDLPYAYHILMKDASQNRTMERRGSKHRSSLYSDMSSEVCAAFHVSPHHKCPISQSSFTVSIIGAVFLVVLAHLF.

Residues 1–17 (MNLQILLLLLLFCHVAA) form the signal peptide. An N-linked (GlcNAc...) asparagine glycan is attached at N115.

This is an uncharacterized protein from Caenorhabditis elegans.